We begin with the raw amino-acid sequence, 188 residues long: Methylated-DNA--protein-cysteine methyltransferase (188 aa).

Residues Tyr-120, Gly-121, and Arg-134 each contribute to the DNA site. The active-site Nucleophile; methyl group acceptor is the Cys-151. Ser-157 lines the DNA pocket.

Belongs to the MGMT family.

Its subcellular location is the nucleus. It carries out the reaction a 6-O-methyl-2'-deoxyguanosine in DNA + L-cysteinyl-[protein] = S-methyl-L-cysteinyl-[protein] + a 2'-deoxyguanosine in DNA. The enzyme catalyses a 4-O-methyl-thymidine in DNA + L-cysteinyl-[protein] = a thymidine in DNA + S-methyl-L-cysteinyl-[protein]. In terms of biological role, involved in the cellular defense against the biological effects of O6-methylguanine (O6-MeG) and O4-methylthymine (O4-MeT) in DNA. Repairs the methylated nucleobase in DNA by stoichiometrically transferring the methyl group to a cysteine residue in the enzyme. This is a suicide reaction: the enzyme is irreversibly inactivated. Prefers double-stranded DNA over single-stranded DNA as substrate. This Saccharomyces cerevisiae (strain ATCC 204508 / S288c) (Baker's yeast) protein is Methylated-DNA--protein-cysteine methyltransferase (MGT1).